Here is a 492-residue protein sequence, read N- to C-terminus: Catalase isozyme 1 (492 aa).

Residues His65 and Asn138 contribute to the active site. Residue Tyr348 participates in heme binding.

Belongs to the catalase family. In terms of assembly, homotetramer. It depends on heme as a cofactor. High expression in seeds and early seedlings.

It is found in the glyoxysome. The enzyme catalyses 2 H2O2 = O2 + 2 H2O. Occurs in almost all aerobically respiring organisms and serves to protect cells from the toxic effects of hydrogen peroxide. This Cucurbita pepo (Vegetable marrow) protein is Catalase isozyme 1 (CAT1).